We begin with the raw amino-acid sequence, 383 residues long: 2-methylcitrate synthase 2 (383 aa).

Residues Arg-73 and His-195 each coordinate substrate. His-230 is a catalytic residue. 263 to 267 (VVMGF) contacts CoA. His-269 is an active-site residue. A substrate-binding site is contributed by Arg-278. The active site involves Asp-320. Arg-345 and Arg-364 together coordinate substrate.

It belongs to the citrate synthase family. As to quaternary structure, homodimer.

It carries out the reaction propanoyl-CoA + oxaloacetate + H2O = (2S,3S)-2-methylcitrate + CoA + H(+). It catalyses the reaction oxaloacetate + acetyl-CoA + H2O = citrate + CoA + H(+). Its pathway is organic acid metabolism; propanoate degradation. It participates in carbohydrate metabolism; tricarboxylic acid cycle; isocitrate from oxaloacetate: step 1/2. Functionally, involved in the catabolism of short chain fatty acids (SCFA) via the tricarboxylic acid (TCA)(acetyl degradation route) and via the 2-methylcitrate cycle I (propionate degradation route). Catalyzes the Claisen condensation of propionyl-CoA and oxaloacetate (OAA) to yield 2-methylcitrate (2-MC) and CoA. Also catalyzes the condensation of oxaloacetate with acetyl-CoA but with a lower specificity. This Corynebacterium glutamicum (strain ATCC 13032 / DSM 20300 / JCM 1318 / BCRC 11384 / CCUG 27702 / LMG 3730 / NBRC 12168 / NCIMB 10025 / NRRL B-2784 / 534) protein is 2-methylcitrate synthase 2 (prpC2).